The sequence spans 874 residues: MANLSGLSNRSRTTLASLRRFGFQTTQQAKPTESSKTPIDASVAENWSIRPELLSLFQETLQTELGAQVRIRPRPRILALSHGRNTNTVSADGFDFHFGVRAQVNPVAAPIRDLHDAFNPDGLLESLTAAFDTSPYPIRAVVLTYPGNPLGQCCSAEALRRCAKFCHDRELHLICDEVYALSYFGAADSEATPFQSIVSFDLNAMGCDLSRVHVVWSMSKDFGCSGLRLGCVISQANPELILGLRVPTSTEVSSLSTLCSTALLTSATLPDIIELNVKRLLLSYKAVIATLECHGVEYIPATAGLCVFARLAPEAKTPDDEIGFQHRLRDSGLLRASSISYNSMVKGSSDKIRPNNVRQKKMEPTLKILGASLQEALSQLTGPLNKERLAALHDHSEGRLVDANLGEAAAYTIDLLHQVEQLLEPSSLVLADHFLGYLNTKCLCAAVEFHIPDLLVEGPKSVSQLAQLSGARADRLGQVLRLLRNNGIFQYDTENATYSNNPTSSMLRSDHWTQWHNWVDLYGNEFYDMARGIPASLKQGTTRTPAQINFNTDQCMFDYFTAQGWLPRLHRTLGGGATAQAPGILADYPWEDFGDGPFLDIGGGEGALIALILRRHTRTKAALLDTPRVIEHARTLFLSPDGKLSRYGDLTMMVSADGQERTEAEWRTLAGRTGWEIRTIRKLRGAWPSDETSYINYIKPLILAHELEIPHVLSVIDTKDEWFYRIHPERMVPSLKDQDPETKAEVIVFESTACLQYLADRFDDGTWTGRNAAERGSVLSWTAYQTAALGLHENCLRQWDILEKRLARDGQEYIALKDRPTIADLSYFPFSMPWMFQFLGVDIKDWPSIERWSQRMLARPAVQAVMEMGPQIGH.

The segment at 1–339 (MANLSGLSNR…DSGLLRASSI (339 aa)) is aminotransferase ataI. A disordered region spans residues 20-39 (RFGFQTTQQAKPTESSKTPI). The segment covering 23-37 (FQTTQQAKPTESSKT) has biased composition (polar residues). The interval 340-668 (SYNSMVKGSS…QERTEAEWRT (329 aa)) is O-methyltransferase ataM. S-adenosyl-L-methionine is bound at residue aspartate 625. Residues 669–874 (LAGRTGWEIR…VMEMGPQIGH (206 aa)) form a glutathione S-transferase ataG region. Residues 699-766 (KPLILAHELE…YLADRFDDGT (68 aa)) enclose the GST N-terminal domain. The GST C-terminal domain occupies 739-874 (DPETKAEVIV…VMEMGPQIGH (136 aa)).

It in the N-terminal section; belongs to the class-I pyridoxal-phosphate-dependent aminotransferase family. In the 2nd section; belongs to the class I-like SAM-binding methyltransferase superfamily. Cation-independent O-methyltransferase family. The protein in the C-terminal section; belongs to the GST superfamily. Pyridoxal 5'-phosphate serves as cofactor.

The enzyme catalyses RX + glutathione = an S-substituted glutathione + a halide anion + H(+). It participates in mycotoxin biosynthesis. In terms of biological role, trimodular acetylaranotin synthesis protein; part of the gene cluster that mediates the biosynthesis of acetylaranotin, a member of the epipolythiodioxopiperazine (ETP) class of toxins characterized by a disulfide-bridged cyclic dipeptide. The first step of acetylaranotin biosynthesis is performed by the NRPS ataP which produces diketopiperazine cyclo-L-Phe-L-Phe via the condensation of 2 phenylalanines (L-Phe). The ataC domain of ataTC then catalyzes the formation of bishydroxylation of cyclo-L-Phe-L-Phe. The glutathione S-transferase domain ataG in ataIMG further catalyzes the conjugation of two glutathiones to the bishydroxylated intermediate. Next, the dipeptidase ataJ removes the Glu residues. The following step is performed by the carbon sulfur lyase domain ataI of ataIMG which may convert the bis-cysteinyl adduct to yield an epidithiol intermediate. The ataT domain from ataTC then catalyzes the oxidation of the free dithiols, followed by a cyclization step catalyzed by the cytochrome P450 ataF. AtaF probably acts as an epoxidase to promote a dual epoxidation formation at C8 and C9 along with C8' and C9', followed by the spontaneous nucleophilic attack of the amide nitrogens N10 and N10' to yield an intermediate with the pyrrolidine partial structure. The final steps of acetylaranotin biosynthesis involve the acetylation and ring rearrangement of an epitetrathiodiketopiperazine intermediate to produce acetylaranotin. AtaH probably catalyzes the acetylation of epitetrathiodiketopiperazine to produce a diacetate and ataY is responsible for the formation of the dihydrooxepin moiety that converts the diacetate intermediate to acetylaranotin via acetylapoaranotin. Both enzymes could function independently in the absence of the other. The acetylaranotin bis-thiomethyltransferase ataS located outside of acetylaranotin gene cluster is the main thiomethyltransferase responsible for converting acetylaranotin and its related intermediates to their methylated forms. The protein is Trimodular acetylaranotin synthesis protein ataIMG of Aspergillus terreus (strain NIH 2624 / FGSC A1156).